Here is a 137-residue protein sequence, read N- to C-terminus: Small ribosomal subunit protein bS6 (137 aa).

Belongs to the bacterial ribosomal protein bS6 family.

Binds together with bS18 to 16S ribosomal RNA. The chain is Small ribosomal subunit protein bS6 from Mycoplasma mycoides subsp. mycoides SC (strain CCUG 32753 / NCTC 10114 / PG1).